A 68-amino-acid polypeptide reads, in one-letter code: ATP synthase F(0) complex subunit 8 (68 aa).

Residues 8-24 (VWPTTITPMLLTLFLIT) traverse the membrane as a helical segment. Residue Lys-54 is modified to N6-acetyllysine; alternate. Lys-54 bears the N6-succinyllysine; alternate mark. Position 57 is an N6-acetyllysine (Lys-57).

Belongs to the ATPase protein 8 family. In terms of assembly, component of the ATP synthase complex composed at least of ATP5F1A/subunit alpha, ATP5F1B/subunit beta, ATP5MC1/subunit c (homooctomer), MT-ATP6/subunit a, MT-ATP8/subunit 8, ATP5ME/subunit e, ATP5MF/subunit f, ATP5MG/subunit g, ATP5MK/subunit k, ATP5MJ/subunit j, ATP5F1C/subunit gamma, ATP5F1D/subunit delta, ATP5F1E/subunit epsilon, ATP5PF/subunit F6, ATP5PB/subunit b, ATP5PD/subunit d, ATP5PO/subunit OSCP. ATP synthase complex consists of a soluble F(1) head domain (subunits alpha(3) and beta(3)) - the catalytic core - and a membrane F(0) domain - the membrane proton channel (subunits c, a, 8, e, f, g, k and j). These two domains are linked by a central stalk (subunits gamma, delta, and epsilon) rotating inside the F1 region and a stationary peripheral stalk (subunits F6, b, d, and OSCP). Interacts with PRICKLE3.

The protein localises to the mitochondrion membrane. Its function is as follows. Subunit 8, of the mitochondrial membrane ATP synthase complex (F(1)F(0) ATP synthase or Complex V) that produces ATP from ADP in the presence of a proton gradient across the membrane which is generated by electron transport complexes of the respiratory chain. ATP synthase complex consist of a soluble F(1) head domain - the catalytic core - and a membrane F(1) domain - the membrane proton channel. These two domains are linked by a central stalk rotating inside the F(1) region and a stationary peripheral stalk. During catalysis, ATP synthesis in the catalytic domain of F(1) is coupled via a rotary mechanism of the central stalk subunits to proton translocation. In vivo, can only synthesize ATP although its ATP hydrolase activity can be activated artificially in vitro. Part of the complex F(0) domain. This is ATP synthase F(0) complex subunit 8 from Pan paniscus (Pygmy chimpanzee).